Reading from the N-terminus, the 248-residue chain is Functional amyloid sbunit FapE (248 aa).

Positions 1–20 are cleaved as a signal peptide; sequence MNTSRWLTALCLAASMPAYA.

It belongs to the FapE family. As to quaternary structure, a minor component of purified amyloid fibrils. Fibrils are resistant to boiling in 2% (weight/vol) SDS and require &gt;90% (vol/vol) formic acid to dissolve.

It is found in the fimbrium. It localises to the secreted. In terms of biological role, a minor component of the functional amyloid in this bacterium. Upon overexpression of the endogenous six-gene locus (fapA-fapF) in situ, cells form large clumps during liquid growth, make large amounts of biofilm and produce amyloid fibrils. Expression of the 6 gene operon in E.coli strain BL21(DE3) induces flocculation and biofilm formation with copious extracellular fibrils. The chain is Functional amyloid sbunit FapE from Pseudomonas fluorescens.